A 254-amino-acid polypeptide reads, in one-letter code: Bacteriorhodopsin-I (254 aa).

Positions 1-6 (MSQLAL) are excised as a propeptide. Residue Gln7 is modified to Pyrrolidone carboxylic acid. Helical transmembrane passes span 16–36 (EGIW…YFIA), 51–71 (VITI…FFGF), 91–111 (YADW…LAGA), 116–136 (IGAL…ATLT), 144–164 (AFWT…VAVF), 185–205 (IILV…EGLA), and 212–232 (ETLL…FILL). An N6-(retinylidene)lysine modification is found at Lys224.

This sequence belongs to the archaeal/bacterial/fungal opsin family. The covalent binding of retinal to the apoprotein, bacterioopsin, generates bacteriorhodopsin.

The protein localises to the cell membrane. In terms of biological role, light-driven proton pump. The polypeptide is Bacteriorhodopsin-I (bop1) (Haloquadratum walsbyi (strain DSM 16854 / JCM 12705 / C23)).